A 1249-amino-acid polypeptide reads, in one-letter code: MPKTLTESEVEATFAKLKAADPDRKVDIIQFFGLQLEDVEELPASVIDPFLLILPPLIRSPHSLLLSSVLSSFLPYFLPLIPKHPTTHLRLALLQVLPALLEKLNDAKERIHSAAGNAIVILGELSWEAEPPIPASNLNSSGSLKAGSLSSSTATKSKPHETLPHLWERHLKDVLQGKAWRSKVEGMKVLTKMRSKEGAKMGLKAWLGVLVDLLEDGDGNVRDQARETVVELLSPPSTPPAARSEFKRLLVARNVRKTIADDIITRILSGEGSDRSTPAVMNSELGKEEGASRSGAAAPAHSQADDVDIVYVASPQDLEREFHSMLPFFEGKETEENWAPRERSIVRIRGMMKGQAHVKYQAAFIAGLKGGIVEGMSKTVLSLRTTVAQQSCYLLKELPEGLGAAFDNFVEFLLPILGKMSGFTKKLIADRSQTAVTSIITHTTVHPRIFINHISSGIQEKNVQIRAYSVNHLKTFLIVHASHAKHQIEATPGLSDTLDAAFRKALADVNPGVREVTRQAFWRYHEVWRSKAEVLMNSLDGQARKQLEKANPRTAASPMPSYASSSSTGAPSSANTKPPSKKMDLKAMLAERRRAVKEAGKQAQETNAGSPRVVSNPVFASPGVQHASITGLPRSSSAVGIARHVETSSPSPVRSPTPSSSATRIRPSPSPERIQSPIQTKIEIDSPLRSRYTSLTPDLARSPPKSPSPSLSPSLGLGESPLRQVLTYPAANGRHSVGEGKRAIPELVEVADNGAEHEVDELTLKEGQKTRDDGNTDQELPPTVQEEVDQVEQSQQFESEPRLEHPEPQQGNTFSTSTSGRVPSTPARSIATGTTASLPNSRNGNIKGEKIISSRLNPEAFQTPLNPKTSALRSSSAIRTPAWKDSPRPEAVTPQMMQKLKERRHERSWWVKRQELLEKASPLKPLTPSPSFAILPDIEALELGAPTLKNLQKIALFCSSHPVRPEPTAEQDEEEKRAFEEEKRVWTGLFDRVMNGVVDFLRPDKDKELLEQGLVVLWEIVQHQWPLVDDTQRLCHGLFRLRESSDAVVLESTNALISLLVQISDPMLLLCNLRSSLDRFLTKHPAPPSSSADNSDPMTSALSQLSLSSSKESPEKRTRNSGYLFGLTSIGMCVLRLSAPVIVSEGPKLGQIVMEAINDPSSIIRQAAHSLLLAIQCVTHDSRKTLAFVPAMSQGQKDLAVYYMAQNGVLEQIGLHKKATSEGEKGREGDRDNMTGELAGLMSRGVIRE.

Composition is skewed to low complexity over residues Leu-138–Lys-156 and Ala-555–Ala-574. Disordered regions lie at residues Leu-138 to Glu-161, Lys-545 to Phe-619, His-644 to Gly-718, Ala-755 to Ile-846, Ala-860 to Ala-891, and His-1084 to Thr-1118. A compositionally biased stretch (basic and acidic residues) spans Lys-581–Gly-600. Low complexity-rich tracts occupy residues Thr-647–Pro-667 and Ser-708–Gly-718. Residues Ala-755 to Gly-774 are compositionally biased toward basic and acidic residues. Polar residues-rich tracts occupy residues Gln-809–Val-822, Ala-831–Gly-844, and Thr-863–Ile-878. Over residues Ser-1089–Lys-1111 the composition is skewed to low complexity.

This sequence belongs to the CLASP family. As to quaternary structure, interacts with microtubules.

The protein localises to the cytoplasm. It localises to the cytoskeleton. The protein resides in the nucleus. Its subcellular location is the spindle. Microtubule binding protein that promotes the stabilization of dynamic microtubules. Required for mitotic spindle formation. This is Protein STU1 (STU1) from Cryptococcus neoformans var. neoformans serotype D (strain JEC21 / ATCC MYA-565) (Filobasidiella neoformans).